The primary structure comprises 322 residues: Replication factor C small subunit (322 aa).

45–52 (GPPGVGKT) is a binding site for ATP.

This sequence belongs to the activator 1 small subunits family. RfcS subfamily. Heteromultimer composed of small subunits (RfcS) and large subunits (RfcL).

Its function is as follows. Part of the RFC clamp loader complex which loads the PCNA sliding clamp onto DNA. This is Replication factor C small subunit from Methanocella arvoryzae (strain DSM 22066 / NBRC 105507 / MRE50).